Reading from the N-terminus, the 147-residue chain is Cell division protein SepF 1 (147 aa).

It belongs to the SepF family. In terms of assembly, homodimer. Interacts with FtsZ.

It is found in the cytoplasm. Its function is as follows. Cell division protein that is part of the divisome complex and is recruited early to the Z-ring. Probably stimulates Z-ring formation, perhaps through the cross-linking of FtsZ protofilaments. Its function overlaps with FtsA. The chain is Cell division protein SepF 1 from Desulforamulus reducens (strain ATCC BAA-1160 / DSM 100696 / MI-1) (Desulfotomaculum reducens).